Here is a 283-residue protein sequence, read N- to C-terminus: Thymidylate synthase (283 aa).

DUMP is bound at residue arginine 22. Cysteine 160 acts as the Nucleophile in catalysis. DUMP is bound by residues 180 to 183 (RSCD), asparagine 191, and 221 to 223 (HIY). Aspartate 183 provides a ligand contact to (6R)-5,10-methylene-5,6,7,8-tetrahydrofolate. Position 282 (serine 282) interacts with (6R)-5,10-methylene-5,6,7,8-tetrahydrofolate.

The protein belongs to the thymidylate synthase family. Bacterial-type ThyA subfamily. Homodimer.

It localises to the cytoplasm. It catalyses the reaction dUMP + (6R)-5,10-methylene-5,6,7,8-tetrahydrofolate = 7,8-dihydrofolate + dTMP. The protein operates within pyrimidine metabolism; dTTP biosynthesis. In terms of biological role, catalyzes the reductive methylation of 2'-deoxyuridine-5'-monophosphate (dUMP) to 2'-deoxythymidine-5'-monophosphate (dTMP) while utilizing 5,10-methylenetetrahydrofolate (mTHF) as the methyl donor and reductant in the reaction, yielding dihydrofolate (DHF) as a by-product. This enzymatic reaction provides an intracellular de novo source of dTMP, an essential precursor for DNA biosynthesis. The chain is Thymidylate synthase from Mannheimia succiniciproducens (strain KCTC 0769BP / MBEL55E).